Reading from the N-terminus, the 704-residue chain is Probable ferric reduction oxidase 1 (704 aa).

Residues 1-16 (MGVGEMNKEVIDKVIK) are Cytoplasmic-facing. The chain crosses the membrane as a helical span at residues 17–36 (FLMMVILMGTIVIWIMMPTS). Residues 37–62 (TYKEIWLTSMRAKLGKSIYYGRPGVN) lie on the Lumenal side of the membrane. A helical membrane pass occupies residues 63–81 (LLVYMFPMILLAFLGCIYL). Residues 82–115 (HLKKSTTVNQFNSGVEKKRAKFGALRRPMLVNGP) lie on the Cytoplasmic side of the membrane. Residues 116-139 (LGIVTVTEVMFLTMFMALLLWSLA) traverse the membrane as a helical segment. Topologically, residues 140-207 (NYMYRTFVNV…VGLTSESSIK (68 aa)) are lumenal. Residues 174–294 (GIVGNICLAF…YLYIVFMLFF (121 aa)) enclose the Ferric oxidoreductase domain. The helical transmembrane segment at 208-231 (YHIWLGHLVMIIFTSHGLCYFIYW) threads the bilayer. Heme is bound by residues His209 and His223. Over 232-282 (ISKNQLVSKMLEWDRTAVSNLAGEIALVAGLMMWVTTYPKIRRRLFEVFFY) the chain is Cytoplasmic. The chain crosses the membrane as a helical span at residues 283 to 307 (SHYLYIVFMLFFVFHVGISHALIPL). Positions 284 and 297 each coordinate heme. Residues 308–329 (PGFYIFLVDRFLRFLQSRNNVK) lie on the Lumenal side of the membrane. An FAD-binding FR-type domain is found at 323–430 (QSRNNVKLVS…EGPYGPSSTD (108 aa)). Residues 330 to 350 (LVSARVLPCDTVELNFSKNPM) form a helical membrane-spanning segment. Topologically, residues 351–550 (LMYSPTSTMF…PISPILGPNS (200 aa)) are cytoplasmic. An FAD-binding site is contributed by 372 to 375 (HPFT). An NAD(+)-binding site is contributed by 422-425 (GPYG). Residues 551–573 (WLCLAAILSSSFMIFIVIIAIIT) traverse the membrane as a helical segment. Residues 574-592 (RYHIHPIDQNSEKYTWAYK) are Lumenal-facing. A helical transmembrane segment spans residues 593–614 (SLIYLVSISITVVTTSTAAMLW). Residues 615–704 (NKKKYYAKND…LHFESISFSW (90 aa)) lie on the Cytoplasmic side of the membrane.

It belongs to the ferric reductase (FRE) family. FAD is required as a cofactor. In terms of tissue distribution, expressed in siliques. Detected in roots.

The protein resides in the membrane. It carries out the reaction 2 a Fe(II)-siderophore + NAD(+) + H(+) = 2 a Fe(III)-siderophore + NADH. Ferric chelate reductase involved in iron reduction in roots. May participate in the transport of electrons to a Fe(3+) ion via FAD and heme intermediates. The chain is Probable ferric reduction oxidase 1 (FRO1) from Arabidopsis thaliana (Mouse-ear cress).